The following is a 179-amino-acid chain: ATP synthase subunit delta (179 aa).

Belongs to the ATPase delta chain family. F-type ATPases have 2 components, F(1) - the catalytic core - and F(0) - the membrane proton channel. F(1) has five subunits: alpha(3), beta(3), gamma(1), delta(1), epsilon(1). F(0) has three main subunits: a(1), b(2) and c(10-14). The alpha and beta chains form an alternating ring which encloses part of the gamma chain. F(1) is attached to F(0) by a central stalk formed by the gamma and epsilon chains, while a peripheral stalk is formed by the delta and b chains.

The protein localises to the cell membrane. F(1)F(0) ATP synthase produces ATP from ADP in the presence of a proton or sodium gradient. F-type ATPases consist of two structural domains, F(1) containing the extramembraneous catalytic core and F(0) containing the membrane proton channel, linked together by a central stalk and a peripheral stalk. During catalysis, ATP synthesis in the catalytic domain of F(1) is coupled via a rotary mechanism of the central stalk subunits to proton translocation. Its function is as follows. This protein is part of the stalk that links CF(0) to CF(1). It either transmits conformational changes from CF(0) to CF(1) or is implicated in proton conduction. The protein is ATP synthase subunit delta of Clostridium botulinum (strain 657 / Type Ba4).